A 211-amino-acid chain; its full sequence is Transcription antitermination protein NusB (211 aa).

The disordered stretch occupies residues 152-211 (PAKKERVANPFPSTPPKKPENVPNPFSTPFKKNSSEPIRNPFEGNKSPQPPQKTLRRKKK). Residues 175–188 (NPFSTPFKKNSSEP) show a composition bias toward polar residues.

It belongs to the NusB family.

Involved in transcription antitermination. Required for transcription of ribosomal RNA (rRNA) genes. Binds specifically to the boxA antiterminator sequence of the ribosomal RNA (rrn) operons. The polypeptide is Transcription antitermination protein NusB (Chloroherpeton thalassium (strain ATCC 35110 / GB-78)).